The sequence spans 513 residues: Cytochrome P450 94A2 (513 aa).

Residues 7–24 (ISWLLFSTSLFWFLFLAT) form a helical membrane-spanning segment. A heme-binding site is contributed by Cys455.

The protein belongs to the cytochrome P450 family. The cofactor is heme. Weakly expressed in seedlings.

It localises to the endoplasmic reticulum membrane. In terms of biological role, catalyzes the omega-hydroxylation of various fatty acids (FA). The substrate specificity is higher for myristate &gt; laurate = palmitate (C14&gt;C16=C12). In Vicia sativa (Spring vetch), this protein is Cytochrome P450 94A2 (CYP94A2).